A 297-amino-acid chain; its full sequence is ATP synthase gamma chain (297 aa).

The protein belongs to the ATPase gamma chain family. In terms of assembly, F-type ATPases have 2 components, CF(1) - the catalytic core - and CF(0) - the membrane proton channel. CF(1) has five subunits: alpha(3), beta(3), gamma(1), delta(1), epsilon(1). CF(0) has three main subunits: a, b and c.

It localises to the cell membrane. Its function is as follows. Produces ATP from ADP in the presence of a proton gradient across the membrane. The gamma chain is believed to be important in regulating ATPase activity and the flow of protons through the CF(0) complex. This Renibacterium salmoninarum (strain ATCC 33209 / DSM 20767 / JCM 11484 / NBRC 15589 / NCIMB 2235) protein is ATP synthase gamma chain.